Reading from the N-terminus, the 512-residue chain is NADH-quinone oxidoreductase subunit N (512 aa).

The next 14 membrane-spanning stretches (helical) occupy residues 32 to 52, 57 to 77, 97 to 117, 126 to 146, 151 to 171, 186 to 206, 231 to 251, 264 to 284, 296 to 316, 324 to 344, 348 to 368, 392 to 412, 431 to 451, and 473 to 493; these read VLPA…SVLF, FIIV…AVFY, VLSF…AAIV, IEFP…TLMT, FILV…LIGM, FLLG…LFGG, IGLV…PYHA, VTGY…LILY, WAWL…LLAL, MLAY…SAGI, VLFY…ILAY, AIAI…GGFW, ILLI…LRIG, and VGVT…WFLL.

This sequence belongs to the complex I subunit 2 family. As to quaternary structure, NDH-1 is composed of 14 different subunits. Subunits NuoA, H, J, K, L, M, N constitute the membrane sector of the complex.

The protein localises to the cell inner membrane. It catalyses the reaction a quinone + NADH + 5 H(+)(in) = a quinol + NAD(+) + 4 H(+)(out). Its function is as follows. NDH-1 shuttles electrons from NADH, via FMN and iron-sulfur (Fe-S) centers, to quinones in the respiratory chain. The immediate electron acceptor for the enzyme in this species is believed to be ubiquinone. Couples the redox reaction to proton translocation (for every two electrons transferred, four hydrogen ions are translocated across the cytoplasmic membrane), and thus conserves the redox energy in a proton gradient. This chain is NADH-quinone oxidoreductase subunit N, found in Leptospira interrogans serogroup Icterohaemorrhagiae serovar Lai (strain 56601).